Here is a 163-residue protein sequence, read N- to C-terminus: 6,7-dimethyl-8-ribityllumazine synthase (163 aa).

Residues F27, 58–60 (ALE), and 87–89 (CVI) contribute to the 5-amino-6-(D-ribitylamino)uracil site. 92–93 (DT) provides a ligand contact to (2S)-2-hydroxy-3-oxobutyl phosphate. Residue H95 is the Proton donor of the active site. A 5-amino-6-(D-ribitylamino)uracil-binding site is contributed by N120. R134 is a binding site for (2S)-2-hydroxy-3-oxobutyl phosphate.

This sequence belongs to the DMRL synthase family.

It carries out the reaction (2S)-2-hydroxy-3-oxobutyl phosphate + 5-amino-6-(D-ribitylamino)uracil = 6,7-dimethyl-8-(1-D-ribityl)lumazine + phosphate + 2 H2O + H(+). The protein operates within cofactor biosynthesis; riboflavin biosynthesis; riboflavin from 2-hydroxy-3-oxobutyl phosphate and 5-amino-6-(D-ribitylamino)uracil: step 1/2. Functionally, catalyzes the formation of 6,7-dimethyl-8-ribityllumazine by condensation of 5-amino-6-(D-ribitylamino)uracil with 3,4-dihydroxy-2-butanone 4-phosphate. This is the penultimate step in the biosynthesis of riboflavin. This is 6,7-dimethyl-8-ribityllumazine synthase from Afipia carboxidovorans (strain ATCC 49405 / DSM 1227 / KCTC 32145 / OM5) (Oligotropha carboxidovorans).